Reading from the N-terminus, the 967-residue chain is Phosphoenolpyruvate carboxylase (967 aa).

Ser-11 is modified (phosphoserine). Active-site residues include His-172 and Lys-601.

It belongs to the PEPCase type 1 family. Homotetramer. The cofactor is Mg(2+).

It is found in the cytoplasm. The catalysed reaction is oxaloacetate + phosphate = phosphoenolpyruvate + hydrogencarbonate. Its pathway is photosynthesis; C3 acid pathway. Its activity is regulated as follows. By light-reversible phosphorylation. In terms of biological role, through the carboxylation of phosphoenolpyruvate (PEP) it forms oxaloacetate, a four-carbon dicarboxylic acid source for the tricarboxylic acid cycle. The sequence is that of Phosphoenolpyruvate carboxylase (PPCA1) from Flaveria pringlei.